The primary structure comprises 449 residues: Probable glycine dehydrogenase (decarboxylating) subunit 1 (449 aa).

Belongs to the GcvP family. N-terminal subunit subfamily. In terms of assembly, the glycine cleavage system is composed of four proteins: P, T, L and H. In this organism, the P 'protein' is a heterodimer of two subunits.

It catalyses the reaction N(6)-[(R)-lipoyl]-L-lysyl-[glycine-cleavage complex H protein] + glycine + H(+) = N(6)-[(R)-S(8)-aminomethyldihydrolipoyl]-L-lysyl-[glycine-cleavage complex H protein] + CO2. Functionally, the glycine cleavage system catalyzes the degradation of glycine. The P protein binds the alpha-amino group of glycine through its pyridoxal phosphate cofactor; CO(2) is released and the remaining methylamine moiety is then transferred to the lipoamide cofactor of the H protein. This chain is Probable glycine dehydrogenase (decarboxylating) subunit 1, found in Rhodospirillum centenum (strain ATCC 51521 / SW).